The chain runs to 342 residues: UDP-glucuronic acid decarboxylase 3 (342 aa).

Polar residues predominate over residues 1–11 (MAATSEKQNTT). The disordered stretch occupies residues 1-22 (MAATSEKQNTTKPPPSPSPLRN). 61 to 86 (DNYFTGSKENLKKWIGHPRFELIRHD) is an NAD(+) binding site. Arginine 170 is a substrate binding site. The active-site Proton acceptor is the tyrosine 173. An NAD(+)-binding site is contributed by 173–177 (YDEGK). Asparagine 202 contributes to the substrate binding site. Arginine 214 is an NAD(+) binding site. Residues 215 to 219 (VVSNF), 232 to 239 (QKPGTQTR), and 299 to 303 (DPRQR) each bind substrate.

Belongs to the NAD(P)-dependent epimerase/dehydratase family. UDP-glucuronic acid decarboxylase subfamily. Requires NAD(+) as cofactor. As to expression, ubiquitous.

The protein localises to the cytoplasm. It catalyses the reaction UDP-alpha-D-glucuronate + H(+) = UDP-alpha-D-xylose + CO2. Its pathway is nucleotide-sugar biosynthesis; UDP-alpha-D-xylose biosynthesis; UDP-alpha-D-xylose from UDP-alpha-D-glucuronate: step 1/1. Catalyzes the NAD-dependent decarboxylation of UDP-glucuronic acid to UDP-xylose. Necessary for the biosynthesis of the core tetrasaccharide in glycosaminoglycan biosynthesis. In Arabidopsis thaliana (Mouse-ear cress), this protein is UDP-glucuronic acid decarboxylase 3 (UXS3).